The primary structure comprises 430 residues: tRNA(Ile)-lysidine synthase (430 aa).

21–26 (SGGLDS) contacts ATP.

It belongs to the tRNA(Ile)-lysidine synthase family.

The protein localises to the cytoplasm. The enzyme catalyses cytidine(34) in tRNA(Ile2) + L-lysine + ATP = lysidine(34) in tRNA(Ile2) + AMP + diphosphate + H(+). In terms of biological role, ligates lysine onto the cytidine present at position 34 of the AUA codon-specific tRNA(Ile) that contains the anticodon CAU, in an ATP-dependent manner. Cytidine is converted to lysidine, thus changing the amino acid specificity of the tRNA from methionine to isoleucine. In Salmonella typhimurium (strain LT2 / SGSC1412 / ATCC 700720), this protein is tRNA(Ile)-lysidine synthase.